Reading from the N-terminus, the 201-residue chain is 3-isopropylmalate dehydratase small subunit (201 aa).

Belongs to the LeuD family. LeuD type 1 subfamily. Heterodimer of LeuC and LeuD.

It catalyses the reaction (2R,3S)-3-isopropylmalate = (2S)-2-isopropylmalate. The protein operates within amino-acid biosynthesis; L-leucine biosynthesis; L-leucine from 3-methyl-2-oxobutanoate: step 2/4. Catalyzes the isomerization between 2-isopropylmalate and 3-isopropylmalate, via the formation of 2-isopropylmaleate. The chain is 3-isopropylmalate dehydratase small subunit from Shewanella baltica (strain OS223).